Reading from the N-terminus, the 379-residue chain is Alcohol dehydrogenase 2 (379 aa).

Residues cysteine 47, threonine 49, histidine 69, cysteine 99, cysteine 102, cysteine 105, cysteine 113, and cysteine 177 each contribute to the Zn(2+) site. The an alcohol site is built by threonine 49 and histidine 69. Residue threonine 49 participates in NAD(+) binding. NAD(+)-binding positions include 202–207 (GLGAVG), aspartate 226, lysine 231, threonine 272, valine 295, 295–297 (VGV), phenylalanine 322, and arginine 372.

Belongs to the zinc-containing alcohol dehydrogenase family. Homodimer. Zn(2+) serves as cofactor.

The protein resides in the cytoplasm. The catalysed reaction is a primary alcohol + NAD(+) = an aldehyde + NADH + H(+). The enzyme catalyses a secondary alcohol + NAD(+) = a ketone + NADH + H(+). In Zea mays (Maize), this protein is Alcohol dehydrogenase 2 (ADH2).